The primary structure comprises 232 residues: Phosphatidylserine decarboxylase proenzyme (232 aa).

Ser-190 functions as the Schiff-base intermediate with substrate; via pyruvic acid in the catalytic mechanism. Ser-190 is subject to Pyruvic acid (Ser); by autocatalysis.

This sequence belongs to the phosphatidylserine decarboxylase family. PSD-A subfamily. Heterodimer of a large membrane-associated beta subunit and a small pyruvoyl-containing alpha subunit. Requires pyruvate as cofactor. Post-translationally, is synthesized initially as an inactive proenzyme. Formation of the active enzyme involves a self-maturation process in which the active site pyruvoyl group is generated from an internal serine residue via an autocatalytic post-translational modification. Two non-identical subunits are generated from the proenzyme in this reaction, and the pyruvate is formed at the N-terminus of the alpha chain, which is derived from the carboxyl end of the proenzyme. The post-translation cleavage follows an unusual pathway, termed non-hydrolytic serinolysis, in which the side chain hydroxyl group of the serine supplies its oxygen atom to form the C-terminus of the beta chain, while the remainder of the serine residue undergoes an oxidative deamination to produce ammonia and the pyruvoyl prosthetic group on the alpha chain.

The protein resides in the cell membrane. The catalysed reaction is a 1,2-diacyl-sn-glycero-3-phospho-L-serine + H(+) = a 1,2-diacyl-sn-glycero-3-phosphoethanolamine + CO2. It participates in phospholipid metabolism; phosphatidylethanolamine biosynthesis; phosphatidylethanolamine from CDP-diacylglycerol: step 2/2. Catalyzes the formation of phosphatidylethanolamine (PtdEtn) from phosphatidylserine (PtdSer). The protein is Phosphatidylserine decarboxylase proenzyme of Rhizobium etli (strain ATCC 51251 / DSM 11541 / JCM 21823 / NBRC 15573 / CFN 42).